The sequence spans 179 residues: MTTSEDQTTPAHLDPKTYPRHLTDPTQNIHLELTYSPLNAQSALDKISSPAAGANVLFLGTTRNTFEDRAVSQLSYTAYPPLTLKTLAGIARDAVAKHGLTGIVIAHRLGVVPIREASIVIAVSSGHRRAAWRAGEEVLEICKEKAEIWKREEFVDGGMEWRENRERDGEGKKVVVSEN.

Positions 1–10 (MTTSEDQTTP) are enriched in polar residues. Residues 1–21 (MTTSEDQTTPAHLDPKTYPRH) are disordered. Residues 127–128 (HR), Lys-143, and 150–152 (KRE) each bind substrate.

This sequence belongs to the MoaE family. MOCS2B subfamily. As to quaternary structure, heterotetramer; composed of 2 small (MOCS2A) and 2 large (MOCS2B) subunits.

Its subcellular location is the cytoplasm. The enzyme catalyses 2 [molybdopterin-synthase sulfur-carrier protein]-C-terminal-Gly-aminoethanethioate + cyclic pyranopterin phosphate + H2O = molybdopterin + 2 [molybdopterin-synthase sulfur-carrier protein]-C-terminal Gly-Gly + 2 H(+). It participates in cofactor biosynthesis; molybdopterin biosynthesis. Its function is as follows. Catalytic subunit of the molybdopterin synthase complex, a complex that catalyzes the conversion of precursor Z into molybdopterin. Acts by mediating the incorporation of 2 sulfur atoms from thiocarboxylated MOCS2A into precursor Z to generate a dithiolene group. This Aspergillus oryzae (strain ATCC 42149 / RIB 40) (Yellow koji mold) protein is Molybdopterin synthase catalytic subunit.